We begin with the raw amino-acid sequence, 398 residues long: Succinate--CoA ligase [ADP-forming] subunit beta (398 aa).

Positions 9–253 (KEILNSFGVR…VREENATEVE (245 aa)) constitute an ATP-grasp domain. ATP contacts are provided by residues K50, 57 to 59 (GRG), V106, and E116. Mg(2+) contacts are provided by N208 and D222. Residues N273 and 330-332 (GIV) contribute to the substrate site.

It belongs to the succinate/malate CoA ligase beta subunit family. As to quaternary structure, heterotetramer of two alpha and two beta subunits. The cofactor is Mg(2+).

It carries out the reaction succinate + ATP + CoA = succinyl-CoA + ADP + phosphate. It catalyses the reaction GTP + succinate + CoA = succinyl-CoA + GDP + phosphate. It participates in carbohydrate metabolism; tricarboxylic acid cycle; succinate from succinyl-CoA (ligase route): step 1/1. In terms of biological role, succinyl-CoA synthetase functions in the citric acid cycle (TCA), coupling the hydrolysis of succinyl-CoA to the synthesis of either ATP or GTP and thus represents the only step of substrate-level phosphorylation in the TCA. The beta subunit provides nucleotide specificity of the enzyme and binds the substrate succinate, while the binding sites for coenzyme A and phosphate are found in the alpha subunit. This is Succinate--CoA ligase [ADP-forming] subunit beta from Christiangramia forsetii (strain DSM 17595 / CGMCC 1.15422 / KT0803) (Gramella forsetii).